The chain runs to 1177 residues: Dynein axonemal assembly factor 9 (1177 aa).

A disordered region spans residues Met1–Val27. A compositionally biased stretch (low complexity) spans Leu11–Val27.

As to quaternary structure, interacts with ARL3.

May act as an effector for ARL3. This is Dynein axonemal assembly factor 9 from Homo sapiens (Human).